We begin with the raw amino-acid sequence, 134 residues long: Syncollin (134 aa).

Positions 1–21 (MSPLCLLLLALALVAVPGARG) are cleaved as a signal peptide.

Monomer and homooligomer; most probably hexameric. Interacts with GP2. According to PubMed:10753942 interaction with syntaxins shown in PubMed:9244306 is physiologically questionable. Contains intrachain disulfide bonds. In terms of tissue distribution, specifically expressed in pancreas and also detected in secretory granules of parotid gland (at protein level). Expressed in pancreas, spleen, small intestine, lung and neutrophilic granulocytes (at protein level). Expressed by epithelial cells in duodenum and colon.

It is found in the zymogen granule membrane. It localises to the zymogen granule lumen. Functionally, functions in exocytosis in pancreatic acinar cells regulating the fusion of zymogen granules with each other. May have a pore-forming activity on membranes and regulate exocytosis in other exocrine tissues. This chain is Syncollin (Sycn), found in Rattus norvegicus (Rat).